The primary structure comprises 667 residues: DNA ligase (667 aa).

NAD(+) contacts are provided by residues 34–38, 83–84, and E117; these read DYEFD and SL. K119 acts as the N6-AMP-lysine intermediate in catalysis. The NAD(+) site is built by R140, E176, K289, and K313. Positions 407, 410, 425, and 431 each coordinate Zn(2+). Positions 591–667 constitute a BRCT domain; sequence QVNRNFEGMS…ISEDEFMGMM (77 aa).

The protein belongs to the NAD-dependent DNA ligase family. LigA subfamily. Mg(2+) is required as a cofactor. It depends on Mn(2+) as a cofactor.

The catalysed reaction is NAD(+) + (deoxyribonucleotide)n-3'-hydroxyl + 5'-phospho-(deoxyribonucleotide)m = (deoxyribonucleotide)n+m + AMP + beta-nicotinamide D-nucleotide.. In terms of biological role, DNA ligase that catalyzes the formation of phosphodiester linkages between 5'-phosphoryl and 3'-hydroxyl groups in double-stranded DNA using NAD as a coenzyme and as the energy source for the reaction. It is essential for DNA replication and repair of damaged DNA. In Chlorobium chlorochromatii (strain CaD3), this protein is DNA ligase.